Consider the following 792-residue polypeptide: Kinesin-related protein 2 (792 aa).

2 disordered regions span residues 22 to 50 and 162 to 183; these read TINSRPSLLRKPASSSSQSNDRISYPPST and NNININSNNSSNSNNNILSPVQ. Residues 34–50 show a composition bias toward polar residues; it reads ASSSSQSNDRISYPPST. A coiled-coil region spans residues 284–423; it reads RLSLSIQDIK…LEKSRSDEKV (140 aa). Residues 437 to 781 enclose the Kinesin motor domain; sequence NIRVFCRIRP…LRFAAKVNSC (345 aa). 528-535 contacts ATP; that stretch reads GQTGSGKT.

This sequence belongs to the TRAFAC class myosin-kinesin ATPase superfamily. Kinesin family. NCD subfamily.

It localises to the nucleus. It is found in the cytoplasm. The protein resides in the cytoskeleton. Its subcellular location is the spindle. Functionally, microtubule-dependent motor that is probably involved in microtubule organization in the mitotic spindle. This is Kinesin-related protein 2 (kif2) from Dictyostelium discoideum (Social amoeba).